A 312-amino-acid polypeptide reads, in one-letter code: Protein ABIL2 (312 aa).

The segment at 173-287 (TIRETPPPPV…TEQQQPSKSK (115 aa)) is disordered. Residues 183 to 199 (RKSTSQSSSPRQPPQRS) are compositionally biased toward low complexity. Residues 230 to 251 (SVATRKSASISRPTTPSKSRSI) show a composition bias toward polar residues. Over residues 269-279 (AFEKDNQKETE) the composition is skewed to basic and acidic residues.

This sequence belongs to the ABI family. Binds SCAR.

It localises to the cytoplasm. The protein resides in the cytoskeleton. Functionally, involved in regulation of actin and microtubule organization. Part of a WAVE complex that activates the Arp2/3 complex. The chain is Protein ABIL2 (ABIL2) from Arabidopsis thaliana (Mouse-ear cress).